Reading from the N-terminus, the 833-residue chain is MSTYNHREIEPKWQKYWAEHHTFKTGTDKDKPNFYALDMFPYPSGAGLHVGHPEGYTATDILSRYKRAQGYNVLHPMGWDAFGLPAEQYAMDTGNDPADFTAENIANFKRQINALGFSYDWDREVNTTDPNYYKWTQWIFTKLYEKGLAYEAEVPVNWVEELGTAIANEEVLPDGTSERGGYPVVRKPMRQWMLKITAYAERLLNDLEELDWPESIKDMQRNWIGKSTGANVTFKIKDTDKDFTVFTTRPDTLFGATYAVLAPEHALVDVITSAEQAQAVADYKHAASLKSDLARTDLAKEKTGVWTGAYAINPVNGKEIPIWIADYVLASYGTGAIMAVPAHDERDWEFAKQFDLEIIPVLEGGNVADAAYTEDGPHINSGFLDGLDKAAAIEKMVAWLEKEGVGNEKVTYRLRDWLFSRQRYWGEPIPIIHWEDGTSTAVPESELPLVLPVTKDIRPSGTGESPLANLTDWLEVTREDGVKGRRETNTMPQWAGSSWYYLRYIDPHNNEKLADEDLLKAWLPVDIYIGGAEHAVLHLLYARFWHKFLYDLGVVPTKEPFQKLFNQGMILGTSYRDHRGALVATDKVEKRDGSFFNIETGEELEQAPAKMSKSLKNVVNPDDVVEQYGADTLRVYEMFMGPLDASIAWSEEGLEGSRKFLDRVYRLLNTKELVTENSGALDKVYHETVKSVTEQLEELKFNTAIAQLMIFVNAANKEEKLYVEYAKGFIQLLAPFAPHLAEELWQAVAQTDESISYVAWPTYDESKLVEAEVEIVVQIKGKVRAKLVVAKDLSREELQEIALADEKIKSEIADKEVVKVISVPNKLVNIVVK.

Positions 41–52 match the 'HIGH' region motif; it reads PYPSGAGLHVGH. The 'KMSKS' region signature appears at 610-614; it reads KMSKS. ATP is bound at residue lysine 613.

This sequence belongs to the class-I aminoacyl-tRNA synthetase family.

The protein resides in the cytoplasm. The catalysed reaction is tRNA(Leu) + L-leucine + ATP = L-leucyl-tRNA(Leu) + AMP + diphosphate. The sequence is that of Leucine--tRNA ligase from Streptococcus gordonii (strain Challis / ATCC 35105 / BCRC 15272 / CH1 / DL1 / V288).